Consider the following 185-residue polypeptide: Acireductone dioxygenase (185 aa).

4 residues coordinate Fe(2+): His96, His98, Glu102, and His140. His96, His98, Glu102, and His140 together coordinate Ni(2+).

It belongs to the acireductone dioxygenase (ARD) family. As to quaternary structure, monomer. The cofactor is Fe(2+). Requires Ni(2+) as cofactor.

The enzyme catalyses 1,2-dihydroxy-5-(methylsulfanyl)pent-1-en-3-one + O2 = 3-(methylsulfanyl)propanoate + CO + formate + 2 H(+). It catalyses the reaction 1,2-dihydroxy-5-(methylsulfanyl)pent-1-en-3-one + O2 = 4-methylsulfanyl-2-oxobutanoate + formate + 2 H(+). It functions in the pathway amino-acid biosynthesis; L-methionine biosynthesis via salvage pathway; L-methionine from S-methyl-5-thio-alpha-D-ribose 1-phosphate: step 5/6. Its function is as follows. Catalyzes 2 different reactions between oxygen and the acireductone 1,2-dihydroxy-3-keto-5-methylthiopentene (DHK-MTPene) depending upon the metal bound in the active site. Fe-containing acireductone dioxygenase (Fe-ARD) produces formate and 2-keto-4-methylthiobutyrate (KMTB), the alpha-ketoacid precursor of methionine in the methionine recycle pathway. Ni-containing acireductone dioxygenase (Ni-ARD) produces methylthiopropionate, carbon monoxide and formate, and does not lie on the methionine recycle pathway. This chain is Acireductone dioxygenase, found in Hahella chejuensis (strain KCTC 2396).